Consider the following 508-residue polypeptide: MANDYPSSDEEIMEAQTGSRKRRKTSSDSESDTAPRAPTATSISRVKPAKDRAGHQAASRVAVSKASVPEENGKEKVSFASIDVAPWLVASLASMEIKRPTGIQKACIPEILKGRDCIGGSRTGTGKTVAFSVPILQKWAEDPSGIFGLIITPTRELAIQIYEQVKAISAPQSMKPILVTGGSDQREQAIALASRPHVVIATPGRLAEHIKTSGEDTICGLRRVRFVVFDEADRLLAPGRGSMIPDIETCLSVLPPKEQRQTLLFTATVTPEVLALKSQPRAPGRLPIFVCEVDTETLATPASLSQLYLQTPVTHKECYLHVLLLTPLNLTKSVIIFCNRTKTATLLEYMLRMLDHRVTALHSGLKQQDRISNLARFRAQAARILVATDVAARGLDIPEVGLVVNFDVPRDPDDYIHRVGRTARAGRPGNSVTFIGQRDVELVLAIEERVGGKMSEFEEEGVSVEGRVVRDALKIVTEKKREALLNIEEGRDVKGNRMVGMKKRRVVE.

A disordered region spans residues 1-68 (MANDYPSSDE…SRVAVSKASV (68 aa)). The span at 57–67 (AASRVAVSKAS) shows a compositional bias: low complexity. A Q motif motif is present at residues 77-105 (VSFASIDVAPWLVASLASMEIKRPTGIQK). In terms of domain architecture, Helicase ATP-binding spans 108–287 (IPEILKGRDC…SQPRAPGRLP (180 aa)). Position 121–128 (121–128 (SRTGTGKT)) interacts with ATP. Residues 230–233 (DEAD) carry the DEAD box motif. A Helicase C-terminal domain is found at 323-465 (LLLTPLNLTK…EFEEEGVSVE (143 aa)).

This sequence belongs to the DEAD box helicase family. DDX49/DBP8 subfamily.

The protein resides in the nucleus. It localises to the nucleolus. The enzyme catalyses ATP + H2O = ADP + phosphate + H(+). Its function is as follows. ATP-binding RNA helicase involved in 40S ribosomal subunit biogenesis and is required for the normal formation of 18S rRNAs through pre-rRNA processing at A0, A1 and A2 sites. Required for vegetative growth. This chain is ATP-dependent RNA helicase DBP8 (DBP8), found in Phaeosphaeria nodorum (strain SN15 / ATCC MYA-4574 / FGSC 10173) (Glume blotch fungus).